Consider the following 519-residue polypeptide: Chaperone SurA (519 aa).

The first 31 residues, 1 to 31 (MMRSLHSLRRMSGTVLALMLAAGLPLSAAQA), serve as a signal peptide directing secretion. 2 stretches are compositionally biased toward low complexity: residues 31 to 45 (AQPAKPAPKGDQKPA) and 197 to 207 (PAAAQATRAPA). Disordered stretches follow at residues 31–50 (AQPAKPAPKGDQKPATPAPS) and 196–221 (NPAAAQATRAPAPQQPQPQPRQPAQS). Residues 223–324 (PAMLVLAQIL…NGFHILKVVD (102 aa)) enclose the PpiC 1 domain. The disordered stretch occupies residues 328 to 361 (GGQPAQAARPAPAPAPQQPSSFQEGPSVAAPQGP). Residues 364-463 (VTQTHARHIL…FGWHLIQVLE (100 aa)) form the PpiC 2 domain.

It localises to the periplasm. The enzyme catalyses [protein]-peptidylproline (omega=180) = [protein]-peptidylproline (omega=0). Its function is as follows. Chaperone involved in the correct folding and assembly of outer membrane proteins. Recognizes specific patterns of aromatic residues and the orientation of their side chains, which are found more frequently in integral outer membrane proteins. May act in both early periplasmic and late outer membrane-associated steps of protein maturation. This Bordetella bronchiseptica (strain ATCC BAA-588 / NCTC 13252 / RB50) (Alcaligenes bronchisepticus) protein is Chaperone SurA.